Here is a 1005-residue protein sequence, read N- to C-terminus: Retinoblastoma-related protein (1005 aa).

The interval Thr404–Leu605 is domain A. Residues Thr404 to Pro853 form a pocket region. A spacer region spans residues Thr606–Glu722. Residues Thr723 to Pro853 are domain B. A compositionally biased stretch (polar residues) spans Val863–Glu873. The segment at Val863–Asp899 is disordered.

This sequence belongs to the retinoblastoma protein (RB) family.

The protein localises to the nucleus. Functionally, regulator of biological processes that recruits a histone deacetylase to control gene transcription. May play a role in the entry into mitosis, negatively regulating the cell proliferation. Formation of stable complexes with geminiviridae replication-associated proteins may create a cellular environment which favors viral DNA replication. The protein is Retinoblastoma-related protein (RBR) of Pilosella piloselloides (Glaucous king-devil hawkweed).